A 178-amino-acid chain; its full sequence is FXYD domain-containing ion transport regulator 5 (178 aa).

The first 21 residues, 1-21 (MSPSGRLCLLTIVGLILPTRG), serve as a signal peptide directing secretion. At 22–145 (QTLKDTTSSS…FYDEHTLRKR (124 aa)) the chain is on the extracellular side. The interval 23-131 (TLKDTTSSSS…QTLKPSGFHE (109 aa)) is disordered. Low complexity-rich tracts occupy residues 26–36 (DTTSSSSADST) and 68–77 (TPQPQTQTQQ). The segment covering 103-125 (DTTTLSERPSPSTDVQTDPQTLK) has biased composition (polar residues). The chain crosses the membrane as a helical span at residues 146–164 (GLLVAAVLFITGIIILTSG). The Cytoplasmic portion of the chain corresponds to 165 to 178 (KCRQLSRLCRNRCR).

It belongs to the FXYD family. In terms of assembly, regulatory subunit of the sodium/potassium-transporting ATPase which is composed of a catalytic alpha subunit, a non-catalytic beta subunit and an additional regulatory subunit. The regulatory subunit, a member of the FXYD protein family, modulates the enzymatic activity in a tissue- and isoform-specific way by changing affinities of the Na+/K+-ATPase toward Na(+), K(+) or ATP. Glycosylated.

The protein resides in the cell membrane. It localises to the basolateral cell membrane. Its function is as follows. Associates with and regulates the activity of the sodium/potassium-transporting ATPase (NKA) which catalyzes the hydrolysis of ATP coupled with the exchange of Na(+) and K(+) ions across the plasma membrane. May increase NKA activity by increasing the apparent affinity for Na(+). Involved in down-regulation of E-cadherin which results in reduced cell adhesion. Promotes metastasis. In Homo sapiens (Human), this protein is FXYD domain-containing ion transport regulator 5 (FXYD5).